The primary structure comprises 730 residues: ATP-dependent DNA helicase Hel308 (730 aa).

ATP-binding positions include Q28 and 46-53 (IPTASGKT). The Helicase ATP-binding domain maps to 33–199 (EKGLLEGKNL…WLDAELVLSE (167 aa)). A DEAH box motif is present at residues 144-147 (DEVH). Positions 232 to 433 (AVNLVLDTIK…ALRTHILSTI (202 aa)) constitute a Helicase C-terminal domain.

The protein belongs to the helicase family. Hel308 subfamily. Monomer.

It catalyses the reaction Couples ATP hydrolysis with the unwinding of duplex DNA by translocating in the 3'-5' direction.. It carries out the reaction ATP + H2O = ADP + phosphate + H(+). Functionally, DNA-dependent ATPase and 3'-5' DNA helicase that may be involved in repair of stalled replication forks. In Methanosarcina mazei (strain ATCC BAA-159 / DSM 3647 / Goe1 / Go1 / JCM 11833 / OCM 88) (Methanosarcina frisia), this protein is ATP-dependent DNA helicase Hel308.